The chain runs to 917 residues: Translation initiation factor IF-2 (917 aa).

Residues 241–312 (EEAKKGTLHK…GGWRSGGGRK (72 aa)) form a disordered region. Basic and acidic residues predominate over residues 252–262 (AKAEGAEDKKK). The span at 274-283 (SSETSSTWQE) shows a compositional bias: polar residues. A compositionally biased stretch (gly residues) spans 298–308 (TSGGVGGWRSG). Positions 415 to 582 (PRPPVVTVMG…NVLLQAEILE (168 aa)) constitute a tr-type G domain. The tract at residues 424–431 (GHVDHGKT) is G1. Position 424-431 (424-431 (GHVDHGKT)) interacts with GTP. The tract at residues 449-453 (GITQH) is G2. The G3 stretch occupies residues 470-473 (DTPG). GTP contacts are provided by residues 470 to 474 (DTPGH) and 524 to 527 (NKID). Residues 524–527 (NKID) form a G4 region. The G5 stretch occupies residues 560–562 (SAK).

The protein belongs to the TRAFAC class translation factor GTPase superfamily. Classic translation factor GTPase family. IF-2 subfamily.

It localises to the cytoplasm. Functionally, one of the essential components for the initiation of protein synthesis. Protects formylmethionyl-tRNA from spontaneous hydrolysis and promotes its binding to the 30S ribosomal subunits. Also involved in the hydrolysis of GTP during the formation of the 70S ribosomal complex. The protein is Translation initiation factor IF-2 of Polynucleobacter necessarius subsp. necessarius (strain STIR1).